The chain runs to 223 residues: ATP-dependent dethiobiotin synthetase BioD (223 aa).

Residue T16 coordinates Mg(2+). K37 is an active-site residue. S41 lines the substrate pocket. 2 residues coordinate Mg(2+): D50 and E111. Residues D50, 111–114, and 171–172 each bind ATP; these read EGAG and NR.

This sequence belongs to the dethiobiotin synthetase family. In terms of assembly, homodimer. Mg(2+) serves as cofactor.

The protein localises to the cytoplasm. It carries out the reaction (7R,8S)-7,8-diammoniononanoate + CO2 + ATP = (4R,5S)-dethiobiotin + ADP + phosphate + 3 H(+). It participates in cofactor biosynthesis; biotin biosynthesis; biotin from 7,8-diaminononanoate: step 1/2. Functionally, catalyzes a mechanistically unusual reaction, the ATP-dependent insertion of CO2 between the N7 and N8 nitrogen atoms of 7,8-diaminopelargonic acid (DAPA, also called 7,8-diammoniononanoate) to form a ureido ring. In Anaeromyxobacter dehalogenans (strain 2CP-1 / ATCC BAA-258), this protein is ATP-dependent dethiobiotin synthetase BioD.